The following is a 219-amino-acid chain: Probable GTP-binding protein EngB (219 aa).

The region spanning 24–207 (VQPEIAFAGR…HELIESWVRP (184 aa)) is the EngB-type G domain. GTP contacts are provided by residues 32-39 (GRSNAGKS), 59-63 (GRTQH), 81-84 (DLPG), 148-151 (TKCD), and 186-188 (FSA). Serine 39 and threonine 61 together coordinate Mg(2+).

Belongs to the TRAFAC class TrmE-Era-EngA-EngB-Septin-like GTPase superfamily. EngB GTPase family. Requires Mg(2+) as cofactor.

In terms of biological role, necessary for normal cell division and for the maintenance of normal septation. This chain is Probable GTP-binding protein EngB, found in Burkholderia ambifaria (strain MC40-6).